Consider the following 396-residue polypeptide: Phosphoglycerate kinase (396 aa).

Residues 21-23 (DFN), R36, 59-62 (HLGR), R118, and R151 contribute to the substrate site. ATP-binding positions include K201, G292, E323, and 349–352 (GGDS).

Belongs to the phosphoglycerate kinase family. In terms of assembly, monomer.

It localises to the cytoplasm. It carries out the reaction (2R)-3-phosphoglycerate + ATP = (2R)-3-phospho-glyceroyl phosphate + ADP. It functions in the pathway carbohydrate degradation; glycolysis; pyruvate from D-glyceraldehyde 3-phosphate: step 2/5. The polypeptide is Phosphoglycerate kinase (Leptospira interrogans serogroup Icterohaemorrhagiae serovar Lai (strain 56601)).